We begin with the raw amino-acid sequence, 1984 residues long: Spermatogenesis-associated protein 31H1 (1984 aa).

Disordered regions lie at residues 448–467 (MGLT…TPGP), 1045–1067 (PMEE…QHSL), 1181–1287 (YRER…SDSK), 1326–1346 (RIGA…KPSQ), and 1439–1984 (QQPR…EATR). Polar residues-rich tracts occupy residues 450–463 (LTKS…SPGT), 1058–1067 (TRISESQHSL), and 1205–1226 (TQAS…QSPA). Residues 1238-1247 (SRPDLVEKTK) show a composition bias toward basic and acidic residues. Composition is skewed to polar residues over residues 1458-1471 (TDSQ…TASV) and 1492-1508 (RNET…TPGT). Basic and acidic residues-rich tracts occupy residues 1532–1558 (DKLT…ERTR) and 1568–1579 (SPSERSQRSSLE). Tandem repeats lie at residues 1593 to 1600 (PSRKNHSS), 1601 to 1608 (PSERSWRS), and 1609 to 1616 (PSQRNHCS). The interval 1593 to 1935 (PSRKNHSSPS…CSPSERSRRS (343 aa)) is 27 X 8 AA approximate tandem repeat of P-S-E-R-S-H-H-S. The segment covering 1599–1610 (SSPSERSWRSPS) has biased composition (low complexity). The segment covering 1620 to 1630 (RSCHSLSERGL) has biased composition (basic and acidic residues). A compositionally biased stretch (basic residues) spans 1636–1647 (RSHRGPSQRRHH). 3 repeat units span residues 1641-1648 (PSQRRHHS), 1649-1656 (PSERSHRS), and 1657-1664 (PSERSHRS). Over residues 1648 to 1667 (SPSERSHRSPSERSHRSSSE) the composition is skewed to basic and acidic residues. Positions 1668 to 1679 (RRHRSPSQRSHR) are enriched in basic residues. Residues 1680-1691 (GPSERSHCSPSE) show a composition bias toward basic and acidic residues. A run of 19 repeats spans residues 1681–1688 (PSERSHCS), 1689–1696 (PSERRHRS), 1697–1704 (PSQRSHRG), 1705–1712 (PSERRHHS), 1713–1720 (PSKRSHRS), 1721–1728 (PARRSHRS), 1729–1736 (PSERSHHS), 1737–1744 (PSERSHHS), 1745–1752 (PSERRHHS), 1753–1760 (PSERSHCS), 1761–1768 (PSERSHCS), 1769–1776 (PSERRHRS), 1777–1784 (PSERRHHS), 1785–1792 (PSEKSHHS), 1793–1800 (PSERSHHS), 1801–1808 (PSERRRHS), 1848–1855 (PSEKSHLS), 1864–1871 (PSERRGHS), and 1880–1887 (PSERSHRS). Positions 1692 to 1727 (RRHRSPSQRSHRGPSERRHHSPSKRSHRSPARRSHR) are enriched in basic residues. The span at 1728-1869 (SPSERSHHSP…SRCSPSERRG (142 aa)) shows a compositional bias: basic and acidic residues. 3 stretches are compositionally biased toward basic and acidic residues: residues 1895–1917 (RTSE…EMRP), 1928–1941 (PSER…KEGL), and 1949–1959 (RPSHSLSRDFK). 2 consecutive repeat copies span residues 1921 to 1928 (SGRNHCSP) and 1929 to 1935 (SERSRRS). Positions 1960–1969 (NQTTLLGTTH) are enriched in polar residues.

In terms of tissue distribution, expressed in sperm (at protein level).

The polypeptide is Spermatogenesis-associated protein 31H1 (Homo sapiens (Human)).